Consider the following 319-residue polypeptide: DNA-directed RNA polymerase subunit alpha (319 aa).

Residues 1-227 (MKEFIFPMKI…KHMNMLTNIS (227 aa)) are alpha N-terminal domain (alpha-NTD). The tract at residues 242-319 (LMEKLTFSIE…NIGEQRSSEV (78 aa)) is alpha C-terminal domain (alpha-CTD).

This sequence belongs to the RNA polymerase alpha chain family. As to quaternary structure, homodimer. The RNAP catalytic core consists of 2 alpha, 1 beta, 1 beta' and 1 omega subunit. When a sigma factor is associated with the core the holoenzyme is formed, which can initiate transcription.

The catalysed reaction is RNA(n) + a ribonucleoside 5'-triphosphate = RNA(n+1) + diphosphate. Functionally, DNA-dependent RNA polymerase catalyzes the transcription of DNA into RNA using the four ribonucleoside triphosphates as substrates. The sequence is that of DNA-directed RNA polymerase subunit alpha from Hydrogenobaculum sp. (strain Y04AAS1).